The chain runs to 314 residues: NADH-ubiquinone oxidoreductase chain 2 (314 aa).

9 helical membrane-spanning segments follow: residues 13-35, 61-80, 85-107, 117-139, 144-166, 189-209, 224-244, 246-266, and 294-314; these read LGVM…VWLG, YFVV…VSLM, VSGL…LHSW, WLAS…SMIL, LWVV…NSVR, VVFV…FYGC, AASG…GFLA, VLVF…GSVI, and IWSL…VSFI.

It belongs to the complex I subunit 2 family.

It localises to the mitochondrion inner membrane. The catalysed reaction is a ubiquinone + NADH + 5 H(+)(in) = a ubiquinol + NAD(+) + 4 H(+)(out). In terms of biological role, core subunit of the mitochondrial membrane respiratory chain NADH dehydrogenase (Complex I) that is believed to belong to the minimal assembly required for catalysis. Complex I functions in the transfer of electrons from NADH to the respiratory chain. The immediate electron acceptor for the enzyme is believed to be ubiquinone. The chain is NADH-ubiquinone oxidoreductase chain 2 (ND2) from Mytilus edulis (Blue mussel).